Here is a 358-residue protein sequence, read N- to C-terminus: Trace amine-associated receptor 7c (358 aa).

Over 1–47 the chain is Extracellular; sequence MATDDDSFPWDQDSILSRDLLSASSLQLCYENLNRSCVRSPYSPGSR. Asn34 is a glycosylation site (N-linked (GlcNAc...) asparagine). 2 disulfides stabilise this stretch: Cys37/Cys201 and Cys120/Cys205. The helical transmembrane segment at 48-68 threads the bilayer; that stretch reads LILYAVFGFGAVLAVCGNLLV. Residues 69–83 lie on the Cytoplasmic side of the membrane; it reads MTSILHFRQLHSPAN. Residues 84-104 form a helical membrane-spanning segment; that stretch reads FLVASLACADLLVGLTVMPFS. Over 105 to 125 the chain is Extracellular; sequence MVRSVEGCWYFGNTYCKFHSC. The chain crosses the membrane as a helical span at residues 126 to 148; sequence FEGSFCYSSLFHLCFISLDRYIA. The Cytoplasmic portion of the chain corresponds to 149-166; it reads VSDPLIYPTRFTASISGK. The helical transmembrane segment at 167–187 threads the bilayer; it reads CITFSWLLSIIYSFSLLYTGA. At 188 to 211 the chain is on the extracellular side; sequence NEAGLEDLVSALTCVGGCQVAVNQ. Residues 212-232 traverse the membrane as a helical segment; it reads SWVFINFLLFLVPALVMMTVY. Over 233–274 the chain is Cytoplasmic; that stretch reads SKIFLIAKQQAQNIEKMSKQTARASESYKDRVAKRERKAAKT. The chain crosses the membrane as a helical span at residues 275-295; it reads LGIAVAAFLLSWLPYFIDSII. The Extracellular segment spans residues 296 to 309; it reads DAFLGFITPTYMYE. The chain crosses the membrane as a helical span at residues 310–332; it reads ILVWIVYYNSAMNPLIYAFFYPW. Residues 333 to 358 lie on the Cytoplasmic side of the membrane; it reads FRKAIKLIVTGKILRENSSTINLFPE.

The protein belongs to the G-protein coupled receptor 1 family.

It localises to the cell membrane. In terms of biological role, olfactory receptor specific for N,N-dimethylalkylamines trace amines. Trace amine compounds are enriched in animal body fluids and act on trace amine-associated receptors (TAARs) to elicit both intraspecific and interspecific innate behaviors. Ligand-binding causes a conformation change that triggers signaling via G(s)-class of G alpha proteins (GNAL or GNAS). This chain is Trace amine-associated receptor 7c, found in Rattus norvegicus (Rat).